A 189-amino-acid chain; its full sequence is GMP synthase [glutamine-hydrolyzing] subunit A (189 aa).

Residues 3–187 enclose the Glutamine amidotransferase type-1 domain; that stretch reads RIDVIDNHGQ…LSVCDQQSVA (185 aa). Cys-73 functions as the Nucleophile in the catalytic mechanism. Catalysis depends on residues His-161 and Glu-163.

As to quaternary structure, heterodimer composed of a glutamine amidotransferase subunit (A) and a GMP-binding subunit (B).

The catalysed reaction is XMP + L-glutamine + ATP + H2O = GMP + L-glutamate + AMP + diphosphate + 2 H(+). It functions in the pathway purine metabolism; GMP biosynthesis; GMP from XMP (L-Gln route): step 1/1. Catalyzes the synthesis of GMP from XMP. This chain is GMP synthase [glutamine-hydrolyzing] subunit A, found in Haloarcula marismortui (strain ATCC 43049 / DSM 3752 / JCM 8966 / VKM B-1809) (Halobacterium marismortui).